Consider the following 146-residue polypeptide: Phospho-2-dehydro-3-deoxyheptonate aldolase (146 aa).

This sequence belongs to the class-II DAHP synthase family. In terms of assembly, homodimer.

It catalyses the reaction D-erythrose 4-phosphate + phosphoenolpyruvate + H2O = 7-phospho-2-dehydro-3-deoxy-D-arabino-heptonate + phosphate. It participates in metabolic intermediate biosynthesis; chorismate biosynthesis; chorismate from D-erythrose 4-phosphate and phosphoenolpyruvate: step 1/7. The protein is Phospho-2-dehydro-3-deoxyheptonate aldolase of Streptomyces lividans.